A 136-amino-acid chain; its full sequence is Large ribosomal subunit protein uL16c (136 aa).

The interval 1 to 20 is disordered; the sequence is MLSPKRTRFRKQHRGRMKGK.

It belongs to the universal ribosomal protein uL16 family. As to quaternary structure, part of the 50S ribosomal subunit.

The protein resides in the plastid. It localises to the chloroplast. The protein is Large ribosomal subunit protein uL16c of Agrostis stolonifera (Creeping bentgrass).